Here is a 360-residue protein sequence, read N- to C-terminus: BLOC-1-related complex subunit 6 (360 aa).

A compositionally biased stretch (basic and acidic residues) spans 1–10; that stretch reads MEAARGRLGP. The disordered stretch occupies residues 1 to 201; that stretch reads MEAARGRLGP…AGAGGGRRAT (201 aa). The span at 23–35 shows a compositional bias: polar residues; the sequence is VTFSGRPSRTLSK. Residue threonine 41 is modified to Phosphothreonine. The segment covering 71–83 has biased composition (basic and acidic residues); sequence HRPELDTWEDKPS. The segment covering 89–100 has biased composition (low complexity); sequence SGARGSRGTSGS. Phosphoserine is present on serine 130. A compositionally biased stretch (acidic residues) spans 144-156; the sequence is EGDDDDDGDDEEA. Residue serine 173 is modified to Phosphoserine. The span at 179–198 shows a compositional bias: gly residues; the sequence is GACGGGGSSSSGEAGAGGGR. Threonine 201 carries the phosphothreonine modification. Serine 204 carries the post-translational modification Phosphoserine.

It belongs to the BORCS6 family. As to quaternary structure, component of the BLOC-one-related complex (BORC) which is composed of BLOC1S1, BLOC1S2, BORCS5, BORCS6, BORCS7, BORCS8, KXD1 and SNAPIN.

The protein localises to the lysosome membrane. As part of the BORC complex may play a role in lysosomes movement and localization at the cell periphery. Associated with the cytosolic face of lysosomes, the BORC complex may recruit ARL8B and couple lysosomes to microtubule plus-end-directed kinesin motor. This Rattus norvegicus (Rat) protein is BLOC-1-related complex subunit 6.